A 668-amino-acid chain; its full sequence is DNA ligase (668 aa).

Residues 34 to 38 (DAEYD), 83 to 84 (SL), and E113 each bind NAD(+). K115 functions as the N6-AMP-lysine intermediate in the catalytic mechanism. NAD(+)-binding residues include R136, E170, K286, and K310. C404, C407, C422, and C427 together coordinate Zn(2+). The region spanning 590-668 (DSDSYFAGKT…EEQLMGELKK (79 aa)) is the BRCT domain.

The protein belongs to the NAD-dependent DNA ligase family. LigA subfamily. Mg(2+) serves as cofactor. The cofactor is Mn(2+).

It catalyses the reaction NAD(+) + (deoxyribonucleotide)n-3'-hydroxyl + 5'-phospho-(deoxyribonucleotide)m = (deoxyribonucleotide)n+m + AMP + beta-nicotinamide D-nucleotide.. Its function is as follows. DNA ligase that catalyzes the formation of phosphodiester linkages between 5'-phosphoryl and 3'-hydroxyl groups in double-stranded DNA using NAD as a coenzyme and as the energy source for the reaction. It is essential for DNA replication and repair of damaged DNA. This is DNA ligase from Bacillus subtilis (strain 168).